The primary structure comprises 403 residues: Aspartic endopeptidase PEP1 (403 aa).

The N-terminal stretch at 1–20 (MVQISQIGAVLAVCSTLTVA) is a signal peptide. Residues 21-67 (APTKGKARFNVPQVAVPMKAVHHPAVAYARALHKFGMKVPKAVSDAA) constitute a propeptide, activation peptide. In terms of domain architecture, Peptidase A1 spans 82 to 400 (YVTQVTVGQG…DTEGPRIGFA (319 aa)). Aspartate 98 is a catalytic residue. N-linked (GlcNAc...) asparagine glycans are attached at residues asparagine 159 and asparagine 270. The active site involves aspartate 293. Cysteine 329 and cysteine 361 form a disulfide bridge.

Belongs to the peptidase A1 family.

It localises to the secreted. The enzyme catalyses Hydrolysis of proteins with broad specificity. Generally favors hydrophobic residues in P1 and P1', but also accepts Lys in P1, which leads to activation of trypsinogen. Does not clot milk.. Secreted aspartic endopeptidase that allows assimilation of proteinaceous substrates. Can catalyze hydrolysis of the major structural proteins of basement membrane, elastin, collagen, and laminin. Thought to play a significant role in virulence. Its function is as follows. Can catalyze hydrolysis of the major structural proteins of basement membrane, elastin, collagen, and laminin. Thought to play a significant role in virulence. The polypeptide is Aspartic endopeptidase PEP1 (PEP1) (Trichophyton verrucosum (strain HKI 0517)).